The sequence spans 237 residues: Ribonuclease PH (237 aa).

Phosphate is bound by residues Arg86 and 124-126 (GTR).

This sequence belongs to the RNase PH family. In terms of assembly, homohexameric ring arranged as a trimer of dimers.

The catalysed reaction is tRNA(n+1) + phosphate = tRNA(n) + a ribonucleoside 5'-diphosphate. Phosphorolytic 3'-5' exoribonuclease that plays an important role in tRNA 3'-end maturation. Removes nucleotide residues following the 3'-CCA terminus of tRNAs; can also add nucleotides to the ends of RNA molecules by using nucleoside diphosphates as substrates, but this may not be physiologically important. Probably plays a role in initiation of 16S rRNA degradation (leading to ribosome degradation) during starvation. This chain is Ribonuclease PH, found in Pseudoalteromonas translucida (strain TAC 125).